The primary structure comprises 316 residues: Ribosomal protein L11 methyltransferase (316 aa).

S-adenosyl-L-methionine contacts are provided by threonine 157, glycine 178, aspartate 200, and asparagine 243.

This sequence belongs to the methyltransferase superfamily. PrmA family.

The protein resides in the cytoplasm. The enzyme catalyses L-lysyl-[protein] + 3 S-adenosyl-L-methionine = N(6),N(6),N(6)-trimethyl-L-lysyl-[protein] + 3 S-adenosyl-L-homocysteine + 3 H(+). Its function is as follows. Methylates ribosomal protein L11. This is Ribosomal protein L11 methyltransferase from Streptococcus pneumoniae serotype 4 (strain ATCC BAA-334 / TIGR4).